Consider the following 520-residue polypeptide: Zinc finger and BTB domain-containing protein 18 (520 aa).

One can recognise a BTB domain in the interval 24-91 (CDCTVLVGDA…MYEGILQFKG (68 aa)). The disordered stretch occupies residues 121-140 (ATTDSTKKEEDTSSFSDKVE). 4 C2H2-type zinc fingers span residues 368-390 (FMCP…LSTH), 408-430 (PTCS…ERTH), 436-458 (YTCT…AVVH), and 464-487 (HACK…RKFH).

It belongs to the krueppel C2H2-type zinc-finger protein family. ZBTB18 subfamily.

It localises to the nucleus. In terms of biological role, transcriptional repressor that plays a role in various developmental processes. Specifically binds the consensus DNA sequence 5'-[AC]ACATCTG[GT][AC]-3' which contains the E box core, and acts by recruiting chromatin remodeling multiprotein complexes. The sequence is that of Zinc finger and BTB domain-containing protein 18 (zbtb18) from Xenopus laevis (African clawed frog).